Reading from the N-terminus, the 546-residue chain is Chaperonin GroEL (546 aa).

Residues 30-33 (TLGP), Lys51, 87-91 (DGTTT), Gly415, 479-481 (NAA), and Asp495 contribute to the ATP site.

This sequence belongs to the chaperonin (HSP60) family. As to quaternary structure, forms a cylinder of 14 subunits composed of two heptameric rings stacked back-to-back. Interacts with the co-chaperonin GroES.

Its subcellular location is the cytoplasm. The enzyme catalyses ATP + H2O + a folded polypeptide = ADP + phosphate + an unfolded polypeptide.. Together with its co-chaperonin GroES, plays an essential role in assisting protein folding. The GroEL-GroES system forms a nano-cage that allows encapsulation of the non-native substrate proteins and provides a physical environment optimized to promote and accelerate protein folding. The polypeptide is Chaperonin GroEL (Pseudomonas putida (strain W619)).